Here is a 668-residue protein sequence, read N- to C-terminus: mRNA cap guanine-N(7) methyltransferase (668 aa).

A compositionally biased stretch (basic and acidic residues) spans 1-19; that stretch reads MYDPARDSWEERDGDEARS. The disordered stretch occupies residues 1-281; it reads MYDPARDSWE…RAQVEEAMRA (281 aa). Over residues 44–65 the composition is skewed to polar residues; that stretch reads GENNNTTDLQQHPDPSSKTTAS. A compositionally biased stretch (low complexity) spans 73–88; it reads SQPAQPTTQTPPSVST. Over residues 100-129 the composition is skewed to polar residues; that stretch reads KASNPQSLTSTAQNQLNKSNTTMENTSGSA. The span at 133-142 shows a compositional bias: basic and acidic residues; the sequence is PRADPSDKPN. The segment covering 148 to 157 has biased composition (polar residues); that stretch reads ASPTDQNGSQ. A compositionally biased stretch (basic and acidic residues) spans 257–279; the sequence is LVDRETLRRRQEERERAQVEEAM. The mRNA cap 0 methyltransferase domain maps to 310–668; sequence SKIKGLRSFN…FYHAFCFYKV (359 aa). Residue 319 to 320 participates in mRNA binding; sequence NN. S-adenosyl-L-methionine is bound by residues lysine 323, glycine 366, aspartate 390, aspartate 428, 471–473, and tyrosine 476; that span reads MFT. The segment at 524-547 is disordered; it reads ARQAQAKKEKSDEAPEDGEVEEDD. Over residues 537–547 the composition is skewed to acidic residues; that stretch reads APEDGEVEEDD.

Belongs to the class I-like SAM-binding methyltransferase superfamily. mRNA cap 0 methyltransferase family.

Its subcellular location is the nucleus. It carries out the reaction a 5'-end (5'-triphosphoguanosine)-ribonucleoside in mRNA + S-adenosyl-L-methionine = a 5'-end (N(7)-methyl 5'-triphosphoguanosine)-ribonucleoside in mRNA + S-adenosyl-L-homocysteine. Responsible for methylating the 5'-cap structure of mRNAs. The sequence is that of mRNA cap guanine-N(7) methyltransferase (abd1) from Aspergillus fumigatus (strain ATCC MYA-4609 / CBS 101355 / FGSC A1100 / Af293) (Neosartorya fumigata).